The primary structure comprises 97 residues: Co-chaperonin GroES (97 aa).

The protein belongs to the GroES chaperonin family. As to quaternary structure, heptamer of 7 subunits arranged in a ring. Interacts with the chaperonin GroEL.

The protein localises to the cytoplasm. Its function is as follows. Together with the chaperonin GroEL, plays an essential role in assisting protein folding. The GroEL-GroES system forms a nano-cage that allows encapsulation of the non-native substrate proteins and provides a physical environment optimized to promote and accelerate protein folding. GroES binds to the apical surface of the GroEL ring, thereby capping the opening of the GroEL channel. The polypeptide is Co-chaperonin GroES (Aeromonas salmonicida (strain A449)).